The primary structure comprises 172 residues: C-phycocyanin beta chain (172 aa).

At asparagine 72 the chain carries N4-methylasparagine. Residues cysteine 82 and cysteine 153 each contribute to the (2R,3E)-phycocyanobilin site.

It belongs to the phycobiliprotein family. As to quaternary structure, heterodimer of an alpha and a beta subunit, which further assembles into trimers and the trimers into hexamers. The basic functional unit of phycobiliproteins is a ring-shaped hexamer formed from two back-to-back trimers contacting via the alpha chain subunits. The trimers are composed of alpha/beta subunit heterodimers arranged around a three-fold axis of symmetry. The phycoerythrins also contain a gamma subunit which is located in the center of the hexamer. In terms of processing, contains two covalently linked phycocyanobilin chromophores.

Its subcellular location is the plastid. It localises to the cyanelle thylakoid membrane. Its function is as follows. Light-harvesting photosynthetic bile pigment-protein from the phycobiliprotein complex (phycobilisome, PBS). Phycocyanin is the major phycobiliprotein in the PBS rod. The chain is C-phycocyanin beta chain (cpcB) from Cyanophora paradoxa.